The primary structure comprises 502 residues: NADH-quinone oxidoreductase subunit N (502 aa).

The next 14 membrane-spanning stretches (helical) occupy residues 16 to 36 (TLVP…IDLF), 47 to 67 (MLSL…AGVF), 85 to 105 (LAIL…PLAL), 113 to 133 (FSYP…QFMV), 138 to 158 (LILI…LIAM), 172 to 192 (FTMG…FYAL), 213 to 233 (IGFV…KLSM), 248 to 268 (SAAL…IVAM), 273 to 293 (FLIH…VVVT), 310 to 330 (MLAY…LIGT), 337 to 357 (LFLY…MLWI), 387 to 407 (ASIM…ALFW), 410 to 430 (MYLM…IMAL), and 470 to 490 (TIIG…NQLI).

Belongs to the complex I subunit 2 family. As to quaternary structure, NDH-1 is composed of 14 different subunits. Subunits NuoA, H, J, K, L, M, N constitute the membrane sector of the complex.

The protein localises to the cell inner membrane. It carries out the reaction a quinone + NADH + 5 H(+)(in) = a quinol + NAD(+) + 4 H(+)(out). Functionally, NDH-1 shuttles electrons from NADH, via FMN and iron-sulfur (Fe-S) centers, to quinones in the respiratory chain. The immediate electron acceptor for the enzyme in this species is believed to be ubiquinone. Couples the redox reaction to proton translocation (for every two electrons transferred, four hydrogen ions are translocated across the cytoplasmic membrane), and thus conserves the redox energy in a proton gradient. The chain is NADH-quinone oxidoreductase subunit N from Sulfurimonas denitrificans (strain ATCC 33889 / DSM 1251) (Thiomicrospira denitrificans (strain ATCC 33889 / DSM 1251)).